The chain runs to 465 residues: Probable glucan endo-1,3-beta-glucosidase eglC (465 aa).

The signal sequence occupies residues 1-19 (MFTKTQILALALSIASAEA). Residue Glu128 is the Proton donor of the active site. Asn183 carries N-linked (GlcNAc...) asparagine glycosylation. Residue Glu239 is the Nucleophile of the active site. Residue Asn318 is glycosylated (N-linked (GlcNAc...) asparagine). Composition is skewed to low complexity over residues 320-333 (SSAS…SAQS) and 380-438 (SPSA…ATPA). 2 disordered regions span residues 320–356 (SSAS…GHGG) and 380–440 (SPSA…PADF). Gly442 is lipidated: GPI-anchor amidated glycine. A propeptide spans 443-465 (AGSRLSGSIFGAAMLVAALAVAL) (removed in mature form).

It belongs to the glycosyl hydrolase 17 family. The GPI-anchor is attached to the protein in the endoplasmic reticulum and serves to target the protein to the cell surface. There, the glucosamine-inositol phospholipid moiety is cleaved off and the GPI-modified mannoprotein is covalently attached via its lipidless GPI glycan remnant to the 1,6-beta-glucan of the outer cell wall layer.

The protein localises to the cell membrane. The protein resides in the secreted. It is found in the cell wall. The enzyme catalyses Hydrolysis of (1-&gt;3)-beta-D-glucosidic linkages in (1-&gt;3)-beta-D-glucans.. In terms of biological role, glucanases play a role in cell expansion during growth, in cell-cell fusion during mating, and in spore release during sporulation. This enzyme may be involved in beta-glucan degradation and also function biosynthetically as a transglycosylase. The protein is Probable glucan endo-1,3-beta-glucosidase eglC (eglC) of Emericella nidulans (strain FGSC A4 / ATCC 38163 / CBS 112.46 / NRRL 194 / M139) (Aspergillus nidulans).